The sequence spans 235 residues: Pyridoxine 5'-phosphate synthase (235 aa).

Position 6 (N6) interacts with 3-amino-2-oxopropyl phosphate. 8 to 9 (DH) is a binding site for 1-deoxy-D-xylulose 5-phosphate. R17 lines the 3-amino-2-oxopropyl phosphate pocket. The Proton acceptor role is filled by H42. R44 and H49 together coordinate 1-deoxy-D-xylulose 5-phosphate. The Proton acceptor role is filled by E69. Position 99 (T99) interacts with 1-deoxy-D-xylulose 5-phosphate. Catalysis depends on H188, which acts as the Proton donor. 3-amino-2-oxopropyl phosphate-binding positions include G189 and 210–211 (GH).

This sequence belongs to the PNP synthase family. In terms of assembly, homooctamer; tetramer of dimers.

It localises to the cytoplasm. The enzyme catalyses 3-amino-2-oxopropyl phosphate + 1-deoxy-D-xylulose 5-phosphate = pyridoxine 5'-phosphate + phosphate + 2 H2O + H(+). It participates in cofactor biosynthesis; pyridoxine 5'-phosphate biosynthesis; pyridoxine 5'-phosphate from D-erythrose 4-phosphate: step 5/5. Functionally, catalyzes the complicated ring closure reaction between the two acyclic compounds 1-deoxy-D-xylulose-5-phosphate (DXP) and 3-amino-2-oxopropyl phosphate (1-amino-acetone-3-phosphate or AAP) to form pyridoxine 5'-phosphate (PNP) and inorganic phosphate. The sequence is that of Pyridoxine 5'-phosphate synthase from Wolbachia sp. subsp. Drosophila simulans (strain wRi).